The following is a 482-amino-acid chain: Hydroxymethylglutaryl-CoA synthase A (482 aa).

The Proton donor/acceptor role is filled by glutamate 85. Residue cysteine 119 is the Acyl-thioester intermediate of the active site. Residues cysteine 119, threonine 161, serine 211, histidine 249, lysine 258, asparagine 325, and serine 358 each contribute to the (3S)-3-hydroxy-3-methylglutaryl-CoA site. Histidine 249 functions as the Proton donor/acceptor in the catalytic mechanism.

This sequence belongs to the thiolase-like superfamily. HMG-CoA synthase family.

The enzyme catalyses acetoacetyl-CoA + acetyl-CoA + H2O = (3S)-3-hydroxy-3-methylglutaryl-CoA + CoA + H(+). It functions in the pathway metabolic intermediate biosynthesis; (R)-mevalonate biosynthesis; (R)-mevalonate from acetyl-CoA: step 2/3. Condenses acetyl-CoA with acetoacetyl-CoA to form HMG-CoA, which is the substrate for HMG-CoA reductase. This is Hydroxymethylglutaryl-CoA synthase A (hgsA) from Dictyostelium discoideum (Social amoeba).